A 64-amino-acid chain; its full sequence is Large ribosomal subunit protein bL35 (64 aa).

The disordered stretch occupies residues 1 to 20; sequence MKQKTHKGTAKRIKVTGSGK.

The protein belongs to the bacterial ribosomal protein bL35 family.

This chain is Large ribosomal subunit protein bL35, found in Corynebacterium urealyticum (strain ATCC 43042 / DSM 7109).